Consider the following 124-residue polypeptide: Putative ankyrin repeat protein RF_1087 (124 aa).

ANK repeat units follow at residues 17–46 (NDQK…NPNI), 50–79 (NGET…IIDS), and 83–112 (FERT…TIGN).

The sequence is that of Putative ankyrin repeat protein RF_1087 from Rickettsia felis (strain ATCC VR-1525 / URRWXCal2) (Rickettsia azadi).